The sequence spans 331 residues: UPF0324 membrane protein SACOL0411 (331 aa).

The next 11 membrane-spanning stretches (helical) occupy residues 9–26 (FMIG…SFLA), 31–48 (ILDK…AILY), 69–88 (LLRF…DIIG), 93–115 (LLAI…NKLL), 122–144 (ALLL…APIF), 154–176 (SIGI…YAIF), 183–202 (YGAW…LAGG), 217–234 (LGRV…ILIM), 247–269 (ISIP…VTIP), 273–295 (LNIL…GLNV), and 308–330 (LMTI…HWLY).

It belongs to the UPF0324 family.

It localises to the cell membrane. The sequence is that of UPF0324 membrane protein SACOL0411 from Staphylococcus aureus (strain COL).